The primary structure comprises 178 residues: Large ribosomal subunit protein bL25 (178 aa).

This sequence belongs to the bacterial ribosomal protein bL25 family. CTC subfamily. As to quaternary structure, part of the 50S ribosomal subunit; part of the 5S rRNA/L5/L18/L25 subcomplex. Contacts the 5S rRNA. Binds to the 5S rRNA independently of L5 and L18.

In terms of biological role, this is one of the proteins that binds to the 5S RNA in the ribosome where it forms part of the central protuberance. The chain is Large ribosomal subunit protein bL25 from Helicobacter pylori (strain Shi470).